The chain runs to 295 residues: MAEEFGSIDLLGDEDFFFDFDPSIVIDSLPAEDFLQSSPDSWIGEIENQLMNDENHQEESFVELDQQSVSDFIADLLVDYPTSDSGSVDLAADKVLTVDSPAAADDSGKENSDLVVEKKSNDSGSEIHDDDDEEGDDDAVAKKRRRRVRNRDAAVRSRERKKEYVQDLEKKSKYLERECLRLGRMLECFVAENQSLRYCLQKGNGNNTTMMSKQESAVLLLESLLLGSLLWLLGVNFICLFPYMSHTKCCLLRPEPEKLVLNGLGSSSKPSYTGVSRRCKGSRPRMKYQILTLAA.

Residues proline 101–alanine 154 are disordered. Residues aspartate 106–isoleucine 127 are compositionally biased toward basic and acidic residues. Residues histidine 128–aspartate 138 show a composition bias toward acidic residues. The bZIP domain occupies valine 140–glycine 203. The interval lysine 142 to lysine 162 is basic motif. The leucine-zipper stretch occupies residues leucine 168 to leucine 182. The chain crosses the membrane as a helical span at residues leucine 224 to methionine 244.

It belongs to the bZIP family. In terms of assembly, interacts with BZIP28. As to expression, expressed in seedlings, rosette and cauline leaves, stems, buds, flowers, siliques, immature seeds, anthers and pollen grains.

The protein localises to the endoplasmic reticulum membrane. It is found in the nucleus. Transcription factor involved in the unfolded protein response (UPR). Acts during endoplasmic reticulum stress (ER) by activating unfolded protein response (UPR) target genes via direct binding to the UPR element (UPRE). Plays a role in plant immunity and abiotic stress responses. This is bZIP transcription factor 60 from Arabidopsis thaliana (Mouse-ear cress).